A 244-amino-acid chain; its full sequence is 2,5-diamino-6-ribosylamino-4(3H)-pyrimidinone 5'-phosphate reductase (244 aa).

Residues threonine 79, aspartate 83, valine 159, and 182–186 (GANVI) contribute to the NADP(+) site.

This sequence belongs to the HTP reductase family. As to quaternary structure, homodimer.

The catalysed reaction is 2,5-diamino-6-(1-D-ribitylamino)pyrimidin-4(3H)-one 5'-phosphate + NADP(+) = 2,5-diamino-6-(1-D-ribosylamino)pyrimidin-4(3H)-one 5'-phosphate + NADPH + H(+). It carries out the reaction 2,5-diamino-6-(1-D-ribitylamino)pyrimidin-4(3H)-one 5'-phosphate + NAD(+) = 2,5-diamino-6-(1-D-ribosylamino)pyrimidin-4(3H)-one 5'-phosphate + NADH + H(+). Its pathway is cofactor biosynthesis; riboflavin biosynthesis. In terms of biological role, catalyzes an early step in riboflavin biosynthesis, the NADPH-dependent reduction of the ribose side chain of 2,5-diamino-6-ribosylamino-4(3H)-pyrimidinone 5'-phosphate, yielding 2,5-diamino-6-ribitylamino-4(3H)-pyrimidinone 5'-phosphate. The protein is 2,5-diamino-6-ribosylamino-4(3H)-pyrimidinone 5'-phosphate reductase (RIB7) of Saccharomyces cerevisiae (strain ATCC 204508 / S288c) (Baker's yeast).